A 423-amino-acid chain; its full sequence is Serine--tRNA ligase (423 aa).

Position 231 to 233 (231 to 233 (TAE)) interacts with L-serine. An ATP-binding site is contributed by 262 to 264 (RSE). Glu285 serves as a coordination point for L-serine. 349–352 (EIGS) contacts ATP. Residue Ser385 participates in L-serine binding.

Belongs to the class-II aminoacyl-tRNA synthetase family. Type-1 seryl-tRNA synthetase subfamily. In terms of assembly, homodimer. The tRNA molecule binds across the dimer.

The protein localises to the cytoplasm. It carries out the reaction tRNA(Ser) + L-serine + ATP = L-seryl-tRNA(Ser) + AMP + diphosphate + H(+). The catalysed reaction is tRNA(Sec) + L-serine + ATP = L-seryl-tRNA(Sec) + AMP + diphosphate + H(+). It functions in the pathway aminoacyl-tRNA biosynthesis; selenocysteinyl-tRNA(Sec) biosynthesis; L-seryl-tRNA(Sec) from L-serine and tRNA(Sec): step 1/1. Catalyzes the attachment of serine to tRNA(Ser). Is also able to aminoacylate tRNA(Sec) with serine, to form the misacylated tRNA L-seryl-tRNA(Sec), which will be further converted into selenocysteinyl-tRNA(Sec). The sequence is that of Serine--tRNA ligase from Acholeplasma laidlawii (strain PG-8A).